Reading from the N-terminus, the 364-residue chain is Dual-specificity RNA methyltransferase RlmN (364 aa).

The active-site Proton acceptor is Glu-91. In terms of domain architecture, Radical SAM core spans 97–333 (ESDRGTLCIS…VTVRKTRGDD (237 aa)). Residues Cys-104 and Cys-338 are joined by a disulfide bond. Residues Cys-111, Cys-115, and Cys-118 each contribute to the [4Fe-4S] cluster site. Residues 164–165 (GE), Ser-196, 218–220 (SLH), and Asn-295 each bind S-adenosyl-L-methionine. Cys-338 (S-methylcysteine intermediate) is an active-site residue.

It belongs to the radical SAM superfamily. RlmN family. The cofactor is [4Fe-4S] cluster.

The protein localises to the cytoplasm. The enzyme catalyses adenosine(2503) in 23S rRNA + 2 reduced [2Fe-2S]-[ferredoxin] + 2 S-adenosyl-L-methionine = 2-methyladenosine(2503) in 23S rRNA + 5'-deoxyadenosine + L-methionine + 2 oxidized [2Fe-2S]-[ferredoxin] + S-adenosyl-L-homocysteine. The catalysed reaction is adenosine(37) in tRNA + 2 reduced [2Fe-2S]-[ferredoxin] + 2 S-adenosyl-L-methionine = 2-methyladenosine(37) in tRNA + 5'-deoxyadenosine + L-methionine + 2 oxidized [2Fe-2S]-[ferredoxin] + S-adenosyl-L-homocysteine. Its function is as follows. Specifically methylates position 2 of adenine 2503 in 23S rRNA and position 2 of adenine 37 in tRNAs. m2A2503 modification seems to play a crucial role in the proofreading step occurring at the peptidyl transferase center and thus would serve to optimize ribosomal fidelity. The polypeptide is Dual-specificity RNA methyltransferase RlmN (Neisseria meningitidis serogroup B (strain ATCC BAA-335 / MC58)).